We begin with the raw amino-acid sequence, 262 residues long: Hydroxyethylthiazole kinase (262 aa).

Residue Met43 participates in substrate binding. Arg118 and Thr164 together coordinate ATP. A substrate-binding site is contributed by Ala191.

It belongs to the Thz kinase family. The cofactor is Mg(2+).

The enzyme catalyses 5-(2-hydroxyethyl)-4-methylthiazole + ATP = 4-methyl-5-(2-phosphooxyethyl)-thiazole + ADP + H(+). It participates in cofactor biosynthesis; thiamine diphosphate biosynthesis; 4-methyl-5-(2-phosphoethyl)-thiazole from 5-(2-hydroxyethyl)-4-methylthiazole: step 1/1. Functionally, catalyzes the phosphorylation of the hydroxyl group of 4-methyl-5-beta-hydroxyethylthiazole (THZ). In Cereibacter sphaeroides (strain KD131 / KCTC 12085) (Rhodobacter sphaeroides), this protein is Hydroxyethylthiazole kinase.